The following is a 319-amino-acid chain: Ribonucleoside-diphosphate reductase small chain (319 aa).

Positions 313–319 (FSLDVDF) are interaction with R1.

Belongs to the ribonucleoside diphosphate reductase small chain family. In terms of assembly, interacts with RNR1/OPG080 subunit. Can interact with host RNR1 supunit. Requires Fe cation as cofactor.

The enzyme catalyses a 2'-deoxyribonucleoside 5'-diphosphate + [thioredoxin]-disulfide + H2O = a ribonucleoside 5'-diphosphate + [thioredoxin]-dithiol. Functionally, ribonucleoside-diphosphate reductase holoenzyme provides the precursors necessary for viral DNA synthesis. Allows virus growth in non-dividing cells. Catalyzes the biosynthesis of deoxyribonucleotides from the corresponding ribonucleotides. This Cynomys gunnisoni (Gunnison's prairie dog) protein is Ribonucleoside-diphosphate reductase small chain (OPG048).